An 82-amino-acid polypeptide reads, in one-letter code: Small ribosomal subunit protein bS16 (82 aa).

Belongs to the bacterial ribosomal protein bS16 family.

The polypeptide is Small ribosomal subunit protein bS16 (Francisella tularensis subsp. tularensis (strain FSC 198)).